We begin with the raw amino-acid sequence, 122 residues long: Modulator protein MzrA (122 aa).

Residues 1–10 lie on the Cytoplasmic side of the membrane; that stretch reads MKILTRIPRR. Residues 11-31 traverse the membrane as a helical segment; sequence LLPWLLGGALALVAVSFAPAL. At 32–122 the chain is on the periplasmic side; that stretch reads LSHETVVQIR…NQDANRSIYS (91 aa).

This sequence belongs to the MzrA family. In terms of assembly, interacts with EnvZ.

It is found in the cell inner membrane. Functionally, modulates the activity of the EnvZ/OmpR two-component regulatory system, probably by directly modulating EnvZ enzymatic activity and increasing stability of phosphorylated OmpR. The chain is Modulator protein MzrA from Pantoea sp. (strain At-9b).